We begin with the raw amino-acid sequence, 145 residues long: Bacilliredoxin SERP1075 (145 aa).

This sequence belongs to the bacilliredoxin family.

This is Bacilliredoxin SERP1075 from Staphylococcus epidermidis (strain ATCC 35984 / DSM 28319 / BCRC 17069 / CCUG 31568 / BM 3577 / RP62A).